Here is a 345-residue protein sequence, read N- to C-terminus: Heat stress transcription factor A-4c (345 aa).

The DNA-binding element occupies 11–105; that stretch reads LPPFLTKTYE…LMKNIHRRKP (95 aa). A hydrophobic repeat HR-A/B region spans residues 119–185; it reads PLTESERRSM…SIVAYVSQVL (67 aa). The Nuclear localization signal signature appears at 199–203; sequence RRKRR. The AHA1 motif lies at 226-235; it reads LTFWENLVSE. The disordered stretch occupies residues 240 to 329; it reads SGLQSSSMDH…NGNKIGNQRT (90 aa). A compositionally biased stretch (low complexity) spans 274–283; the sequence is PPVTVTAPAP. The AHA2 motif lies at 289–298; that stretch reads DDFWEQCLTE. Polar residues-rich tracts occupy residues 296-308 and 317-329; these read LTENPGSTEQQEV and NDNNGNKIGNQRT.

It belongs to the HSF family. Class A subfamily. Homotrimer. In terms of processing, exhibits temperature-dependent phosphorylation. In terms of tissue distribution, expressed in roots, seedlings and at lower levels in leaves.

It is found in the nucleus. Transcriptional activator that specifically binds DNA sequence 5'-AGAAnnTTCT-3' known as heat shock promoter elements (HSE). May be involved in general response to auxin. In Arabidopsis thaliana (Mouse-ear cress), this protein is Heat stress transcription factor A-4c (HSFA4C).